Here is a 601-residue protein sequence, read N- to C-terminus: NADH-ubiquinone oxidoreductase chain 5 (601 aa).

Transmembrane regions (helical) follow at residues 3-23, 36-56, 84-104, 114-134, 140-160, 171-191, 201-221, 240-260, 272-292, 324-346, 365-385, 404-426, 456-476, 483-503, and 581-601; these read LIMP…MMSY, VTSS…MFLL, FFSI…MEFS, INQF…LVTA, LFIG…WWYG, AILY…WLLL, IFML…AAAG, TPVS…FLLV, ILTM…ICAL, AFLH…GSII, MPFT…MPFL, NAWA…TRLI, LALG…PLIT, LYMK…AMGL, and LIKL…MLII.

This sequence belongs to the complex I subunit 5 family.

It localises to the mitochondrion inner membrane. The catalysed reaction is a ubiquinone + NADH + 5 H(+)(in) = a ubiquinol + NAD(+) + 4 H(+)(out). Functionally, core subunit of the mitochondrial membrane respiratory chain NADH dehydrogenase (Complex I) that is believed to belong to the minimal assembly required for catalysis. Complex I functions in the transfer of electrons from NADH to the respiratory chain. The immediate electron acceptor for the enzyme is believed to be ubiquinone. This is NADH-ubiquinone oxidoreductase chain 5 (MT-ND5) from Dasypus novemcinctus (Nine-banded armadillo).